Reading from the N-terminus, the 392-residue chain is L-rhamnonate dehydratase (392 aa).

Substrate-binding residues include His22 and Arg48. Mg(2+) is bound by residues Asp214, Glu240, and Glu268. His318 functions as the Proton acceptor in the catalytic mechanism. Residue Glu338 coordinates substrate.

It belongs to the mandelate racemase/muconate lactonizing enzyme family. RhamD subfamily. As to quaternary structure, homooctamer; tetramer of dimers. Mg(2+) serves as cofactor.

The catalysed reaction is L-rhamnonate = 2-dehydro-3-deoxy-L-rhamnonate + H2O. Its function is as follows. Catalyzes the dehydration of L-rhamnonate to 2-keto-3-deoxy-L-rhamnonate (KDR). The polypeptide is L-rhamnonate dehydratase (Paraburkholderia xenovorans (strain LB400)).